The primary structure comprises 576 residues: MRTSQFFFTTLKEAPADAEVISQKMMLRAGYIKRAAAGIYTWMPLGLRVLRKVENIVREEMNNAGALELLMPAVQPAELWQESGRWEQYGPELLRFKDRHQREFVIGPTHEEVITDVVRRDVKSYRQLPIHLYQIQTKFRDEIRPRFGVMRGREFLMKDGYSFHASFDDLKREYGNMYDTYSRIFSRLGLKFRAVAADTGSIGGTGSHEFHVLADSGEDDIAFCPDSGYAANVELAEAMAPNEARAAASTLMEKTHTPGKMACADVAKFLELPLDRIVKSIAVMSEKEDGSQTFALLLLRGDHELNEIKASKIAAINPFRFATEEEVIERLGCKPGFIGPVAIDATKVAVFADRSVANMSDFVCGANEAGYHMTGVNFGRDLPEPEVFDIRNVVAGDASPDGQGKLEILRGIEVGHIFQLRQKYAEALNCVYLDDSGKSQIMEMGCYGIGVSRIVGAAIEQGNDDKGIILPPAIAPFEVCIVPMGYHKSEAVKASADQLYADLKKIGVDVVLDDRNERPGVMFADMELIGIPHRVVIGERGLKDGLFEYKSRIDAEPTMVAQTDIVTLLQGKLCAA.

It belongs to the class-II aminoacyl-tRNA synthetase family. ProS type 1 subfamily. As to quaternary structure, homodimer.

The protein localises to the cytoplasm. It carries out the reaction tRNA(Pro) + L-proline + ATP = L-prolyl-tRNA(Pro) + AMP + diphosphate. In terms of biological role, catalyzes the attachment of proline to tRNA(Pro) in a two-step reaction: proline is first activated by ATP to form Pro-AMP and then transferred to the acceptor end of tRNA(Pro). As ProRS can inadvertently accommodate and process non-cognate amino acids such as alanine and cysteine, to avoid such errors it has two additional distinct editing activities against alanine. One activity is designated as 'pretransfer' editing and involves the tRNA(Pro)-independent hydrolysis of activated Ala-AMP. The other activity is designated 'posttransfer' editing and involves deacylation of mischarged Ala-tRNA(Pro). The misacylated Cys-tRNA(Pro) is not edited by ProRS. This Dechloromonas aromatica (strain RCB) protein is Proline--tRNA ligase.